We begin with the raw amino-acid sequence, 360 residues long: 3-dehydroquinate synthase (360 aa).

NAD(+) is bound by residues 69–74 (DGEAYK), 103–107 (GVIGD), 127–128 (TT), Lys140, Lys149, and 167–170 (CLQT). Residues Glu182, His245, and His262 each contribute to the Zn(2+) site.

It belongs to the sugar phosphate cyclases superfamily. Dehydroquinate synthase family. Co(2+) is required as a cofactor. Zn(2+) serves as cofactor. The cofactor is NAD(+).

It localises to the cytoplasm. It carries out the reaction 7-phospho-2-dehydro-3-deoxy-D-arabino-heptonate = 3-dehydroquinate + phosphate. It functions in the pathway metabolic intermediate biosynthesis; chorismate biosynthesis; chorismate from D-erythrose 4-phosphate and phosphoenolpyruvate: step 2/7. Its function is as follows. Catalyzes the conversion of 3-deoxy-D-arabino-heptulosonate 7-phosphate (DAHP) to dehydroquinate (DHQ). The protein is 3-dehydroquinate synthase of Aeromonas hydrophila subsp. hydrophila (strain ATCC 7966 / DSM 30187 / BCRC 13018 / CCUG 14551 / JCM 1027 / KCTC 2358 / NCIMB 9240 / NCTC 8049).